The primary structure comprises 151 residues: Neuroglobin (151 aa).

Positions 1–149 (MERPEPELIR…VVQAMSRGWD (149 aa)) constitute a Globin domain. Positions 64 and 96 each coordinate heme b.

It belongs to the globin family. As to quaternary structure, monomer. Homodimer and homotetramer; disulfide-linked. Mainly monomeric but also detected as part of homodimers and homotetramers. Interacts with 14-3-3 proteins; regulates the phosphorylation of NGB. Could interact (ferrous form) with G-alpha(i) proteins (GTP-bound form). Post-translationally, phosphorylated during hypoxia by ERK1/ERK2. Phosphorylation regulates the heme pocket hexacoordination preventing the association of His-64 with the heme metal center. Thereby, promotes the access of dioxygen and nitrite to the heme and stimulates the nitrite reductase activity. Phosphorylation during hypoxia is stabilized by 14-3-3 proteins.

The protein localises to the cytoplasm. It localises to the cytosol. It is found in the mitochondrion matrix. It catalyses the reaction Fe(III)-heme b-[protein] + nitric oxide + H2O = Fe(II)-heme b-[protein] + nitrite + 2 H(+). Functionally, monomeric globin with a bis-histidyl six-coordinate heme-iron atom through which it can bind dioxygen, carbon monoxide and nitric oxide. Could help transport oxygen and increase its availability to the metabolically active neuronal tissues, though its low quantity in tissues as well as its high affinity for dioxygen, which may limit its oxygen-releasing ability, argue against it. The ferrous/deoxygenated form exhibits a nitrite reductase activity and it could produce nitric oxide which in turn inhibits cellular respiration in response to hypoxia. In its ferrous/deoxygenated state, it may also exhibit GDI (Guanine nucleotide Dissociation Inhibitor) activity toward heterotrimeric G-alpha proteins, thereby regulating signal transduction to facilitate neuroprotective responses in the wake of hypoxia and associated oxidative stress. In Macaca mulatta (Rhesus macaque), this protein is Neuroglobin.